The sequence spans 317 residues: Tyrosine--tRNA ligase (317 aa).

Y33 lines the L-tyrosine pocket. The 'HIGH' region motif lies at 38–46; sequence PSGKIHMGH. L-tyrosine-binding residues include Y155, Q159, D162, and Q177. The 'KMSKS' region motif lies at 211-215; the sequence is KMASS. S214 serves as a coordination point for ATP.

It belongs to the class-I aminoacyl-tRNA synthetase family. TyrS type 3 subfamily. In terms of assembly, homodimer.

It localises to the cytoplasm. The catalysed reaction is tRNA(Tyr) + L-tyrosine + ATP = L-tyrosyl-tRNA(Tyr) + AMP + diphosphate + H(+). Its function is as follows. Catalyzes the attachment of tyrosine to tRNA(Tyr) in a two-step reaction: tyrosine is first activated by ATP to form Tyr-AMP and then transferred to the acceptor end of tRNA(Tyr). The protein is Tyrosine--tRNA ligase of Methanosarcina barkeri (strain Fusaro / DSM 804).